Consider the following 408-residue polypeptide: Phosphopentomutase (408 aa).

Asp-10, Asp-303, His-308, Asp-344, His-345, and His-356 together coordinate Mn(2+).

This sequence belongs to the phosphopentomutase family. It depends on Mn(2+) as a cofactor.

Its subcellular location is the cytoplasm. The catalysed reaction is 2-deoxy-alpha-D-ribose 1-phosphate = 2-deoxy-D-ribose 5-phosphate. It catalyses the reaction alpha-D-ribose 1-phosphate = D-ribose 5-phosphate. Its pathway is carbohydrate degradation; 2-deoxy-D-ribose 1-phosphate degradation; D-glyceraldehyde 3-phosphate and acetaldehyde from 2-deoxy-alpha-D-ribose 1-phosphate: step 1/2. Its function is as follows. Isomerase that catalyzes the conversion of deoxy-ribose 1-phosphate (dRib-1-P) and ribose 1-phosphate (Rib-1-P) to deoxy-ribose 5-phosphate (dRib-5-P) and ribose 5-phosphate (Rib-5-P), respectively. In Tolumonas auensis (strain DSM 9187 / NBRC 110442 / TA 4), this protein is Phosphopentomutase.